The following is a 178-amino-acid chain: Prion-like protein doppel (178 aa).

A signal peptide spans 1 to 25; the sequence is MRKHLGGCWLAIVCVLLFSQLSSVK. Positions 27-50 are flexible tail; it reads RGIKHRIKWNRKVLPSTSQVTEAH. Positions 51–154 are globular; that stretch reads TAEIRPGAFI…KHCDFWLERG (104 aa). 2 disulfide bridges follow: C94–C147 and C108–C142. N-linked (GlcNAc...) asparagine glycans are attached at residues N98 and N110. A cu(2+) binding region spans residues 124–141; the sequence is KQDNKLYQRVLWQLIREL. G154 carries the GPI-anchor amidated glycine lipid modification. Positions 155-178 are cleaved as a propeptide — removed in mature form; it reads AGLQVTLDQPMMLCLLVFIWFIVK.

This sequence belongs to the prion family. N-glycosylated. Post-translationally, O-glycosylated. Strongly expressed in testis. Detected at low levels in lymph node, spleen and ovary.

The protein localises to the cell membrane. Required for normal acrosome reaction and for normal male fertility. Can bind Cu(2+). The protein is Prion-like protein doppel (PRND) of Ovis aries (Sheep).